A 322-amino-acid polypeptide reads, in one-letter code: Ferredoxin--NADP reductase (322 aa).

The FAD site is built by Asp34, Gln42, Tyr47, Val87, Phe120, Asp279, and Thr320.

This sequence belongs to the ferredoxin--NADP reductase type 2 family. In terms of assembly, homodimer. FAD is required as a cofactor.

It carries out the reaction 2 reduced [2Fe-2S]-[ferredoxin] + NADP(+) + H(+) = 2 oxidized [2Fe-2S]-[ferredoxin] + NADPH. This is Ferredoxin--NADP reductase from Streptococcus pneumoniae serotype 2 (strain D39 / NCTC 7466).